A 568-amino-acid polypeptide reads, in one-letter code: Protein AF-9 (568 aa).

One can recognise a YEATS domain in the interval 1 to 138; sequence MASSCAVQVK…EDFRRKLLKA (138 aa). Histone H3K9cr binding regions lie at residues 78 to 80 and 106 to 108; these read YAG and LHL. Residues 138–475 form a disordered region; that stretch reads AGGDPNRSIH…PPPPLLKTNN (338 aa). Residues 149–190 show a composition bias toward low complexity; it reads SSSSSSSSSSSSSSSSSSSSSSSSSSSSSSSSSSSSSSSSSS. Residues 202 to 265 show a composition bias toward basic and acidic residues; the sequence is EHKEKPSKDS…PKPMSKEPKP (64 aa). Phosphoserine is present on residues Ser-288 and Ser-294. Residues 295 to 300 carry the Nuclear localization signal motif; the sequence is AKKRKK. A compositionally biased stretch (low complexity) spans 303 to 313; sequence SEALFKSFSSA. Basic and acidic residues predominate over residues 322 to 349; sequence ADKKQIKDKSHVKMGKVKIESETSEKKK. Lys-339 is covalently cross-linked (Glycyl lysine isopeptide (Lys-Gly) (interchain with G-Cter in SUMO2)). Acidic residues predominate over residues 357 to 368; it reads DIVDPNDSDVEE. A compositionally biased stretch (low complexity) spans 371–395; sequence SSKSDSEQPSPASSSSSSSSSFTPS. A phosphoserine mark is found at Ser-412 and Ser-419. Residues 414–429 are compositionally biased toward acidic residues; the sequence is DNEEESDEVEDNDNDS. The span at 445-461 shows a compositional bias: low complexity; sequence VSLSDGSDSESSSASSP. Ser-483 bears the Phosphoserine mark.

In terms of assembly, component of the super elongation complex (SEC), at least composed of EAF1, EAF2, CDK9, MLLT3/AF9, AFF (AFF1 or AFF4), the P-TEFb complex and ELL (ELL, ELL2 or ELL3). Interacts with BCOR. Interacts with CBX8. Interacts with ALKBH4. As to expression, enriched in undifferentiated hematopoietic stem cells in fetal liver, cord blood and bone marrow.

The protein localises to the nucleus. The protein resides in the chromosome. With respect to regulation, crotonylated lysine binding is strongly inhibited by the peptide XL-07i, carrying a 2-furancarbonyl side chain and capped with a hydrophobic carboxybenzyl group. XL-07i targets the unique pi-pi-pi stacking interaction at the crotonylation recognition site. Its function is as follows. Chromatin reader component of the super elongation complex (SEC), a complex required to increase the catalytic rate of RNA polymerase II transcription by suppressing transient pausing by the polymerase at multiple sites along the DNA. Specifically recognizes and binds acylated histone H3, with a preference for histone H3 that is crotonylated. Crotonylation marks active promoters and enhancers and confers resistance to transcriptional repressors. Recognizes and binds histone H3 crotonylated at 'Lys-9' (H3K9cr), and with slightly lower affinity histone H3 crotonylated at 'Lys-18' (H3K18cr). Also recognizes and binds histone H3 acetylated and butyrylated at 'Lys-9' (H3K9ac and H3K9bu, respectively), but with lower affinity than crotonylated histone H3. In the SEC complex, MLLT3 is required to recruit the complex to crotonylated histones. Recruitment of the SEC complex to crotonylated histones promotes recruitment of DOT1L on active chromatin to deposit histone H3 'Lys-79' methylation (H3K79me). Plays a key role in hematopoietic stem cell (HSC) maintenance by preserving, rather than conferring, HSC stemness. Acts by binding to the transcription start site of active genes in HSCs and sustaining level of H3K79me2, probably by recruiting DOT1L. The chain is Protein AF-9 from Homo sapiens (Human).